A 682-amino-acid chain; its full sequence is Methionine--tRNA ligase (682 aa).

Residues 15–25 (PYANGAIHLGH) carry the 'HIGH' region motif. C146, C149, C159, and C162 together coordinate Zn(2+). The 'KMSKS' region signature appears at 331 to 335 (KMSKS). K334 provides a ligand contact to ATP. In terms of domain architecture, tRNA-binding spans 580 to 682 (DFAKLDMRVA…SGVTAGMQVK (103 aa)).

It belongs to the class-I aminoacyl-tRNA synthetase family. MetG type 1 subfamily. As to quaternary structure, homodimer. Zn(2+) serves as cofactor.

It localises to the cytoplasm. The catalysed reaction is tRNA(Met) + L-methionine + ATP = L-methionyl-tRNA(Met) + AMP + diphosphate. Is required not only for elongation of protein synthesis but also for the initiation of all mRNA translation through initiator tRNA(fMet) aminoacylation. The protein is Methionine--tRNA ligase of Haemophilus influenzae (strain PittEE).